We begin with the raw amino-acid sequence, 435 residues long: Mitochondrial association factor 1 form a1 (435 aa).

An N-terminal signal peptide occupies residues 1–20; sequence MWRIWRCRLSFLFATGCLLG. The Vacuolar portion of the chain corresponds to 21-95; sequence ALTAGLGSQM…SVTARRRRNR (75 aa). Residues 43–88 form a disordered region; it reads GVADASQEAGDVVEERTERTEEQVFAPGPPRRHSSESLFPRNASVT. The span at 55–64 shows a compositional bias: basic and acidic residues; that stretch reads VEERTERTEE. Residues 96-116 traverse the membrane as a helical segment; it reads RIAPIATAVGVAVILAALYVL. Residues 117–435 are Cytoplasmic-facing; the sequence is RRRRAQPPQE…ERKYKFPQGD (319 aa). Positions 120–162 are disordered; the sequence is RAQPPQEPEPPTRLRTPRPRAPSEQQQPSESEPPAEVPMTPDP. Residues 141-153 are compositionally biased toward low complexity; it reads PSEQQQPSESEPP.

Interacts with host SAMM50.

It localises to the parasitophorous vacuole membrane. During host cell infection by tachyzoites, does not play a role in tethering the parasitophorous vacuole to the host mitochondria, probably because it does not bind host mitochondrial import protein TOMM70. This is Mitochondrial association factor 1 form a1 from Toxoplasma gondii.